We begin with the raw amino-acid sequence, 858 residues long: Taste receptor type 1 member 3 (858 aa).

The signal sequence occupies residues 1-20; sequence MPGLAILGLSLAAFLELGMG. The Extracellular segment spans residues 21–575; sequence SSLCLSQQFK…FLAWGEPAVL (555 aa). N-linked (GlcNAc...) asparagine glycans are attached at residues Asn-85, Asn-130, Asn-203, Asn-264, Asn-379, Asn-387, Asn-418, Asn-439, and Asn-482. A helical transmembrane segment spans residues 576–596; sequence SLLLLLCLVLGLTLAALGLFV. Topologically, residues 597-610 are cytoplasmic; sequence HYWDSPLVQASGGS. Residues 611–631 form a helical membrane-spanning segment; the sequence is LFCFGLICLGLFCLSVLLFPG. At 632–644 the chain is on the extracellular side; that stretch reads RPRSASCLAQQPM. The chain crosses the membrane as a helical span at residues 645–665; that stretch reads AHLPLTGCLSTLFLQAAEIFV. At 666 to 687 the chain is on the cytoplasmic side; that stretch reads ESELPLSWANWLCSYLRGPWAW. A helical membrane pass occupies residues 688-708; sequence LVVLLATLVEAALCAWYLMAF. Topologically, residues 709 to 735 are extracellular; that stretch reads PPEVVTDWQVLPTEVLEHCRMRSWVSL. A helical membrane pass occupies residues 736–756; sequence GLVHITNAVLAFLCFLGTFLV. Over 757–767 the chain is Cytoplasmic; the sequence is QSQPGRYNRAR. A helical transmembrane segment spans residues 768–788; sequence GLTFAMLAYFIIWVSFVPLLA. Residues 789–796 are Extracellular-facing; it reads NVQVAYQP. A helical membrane pass occupies residues 797–817; sequence AVQMGAILFCALGILATFHLP. At 818–858 the chain is on the cytoplasmic side; the sequence is KCYVLLWLPELNTQEFFLGRSPKEASDGNSGSSEATRGHSE. Residues 839 to 858 are disordered; it reads PKEASDGNSGSSEATRGHSE.

Belongs to the G-protein coupled receptor 3 family. TAS1R subfamily. In terms of assembly, forms homodimers or heterodimers with TAS1R1 and TAS1R2.

Its subcellular location is the cell membrane. Its function is as follows. Putative taste receptor. TAS1R1/TAS1R3 responds to the umami taste stimulus (the taste of monosodium glutamate) and also to most of the 20 standard L-amino acids, but not to their D-enantiomers or other compounds. TAS1R2/TAS1R3 recognizes diverse natural and synthetic sweeteners. TAS1R3 is essential for the recognition and response to the disaccharide trehalose. Sequence differences within and between species can significantly influence the selectivity and specificity of taste responses. The polypeptide is Taste receptor type 1 member 3 (Tas1r3) (Rattus norvegicus (Rat)).